A 192-amino-acid chain; its full sequence is Phosphoheptose isomerase (192 aa).

The 156-residue stretch at 37–192 (LADSFKAGGK…IQLIEKEMVK (156 aa)) folds into the SIS domain. Residue 52-54 (NGG) coordinates substrate. Positions 61 and 65 each coordinate Zn(2+). Substrate-binding positions include Glu65, 93–94 (ND), 119–121 (STS), Ser124, and Gln172. Zn(2+) contacts are provided by Gln172 and His180.

The protein belongs to the SIS family. GmhA subfamily. Homotetramer. Requires Zn(2+) as cofactor.

It localises to the cytoplasm. It catalyses the reaction 2 D-sedoheptulose 7-phosphate = D-glycero-alpha-D-manno-heptose 7-phosphate + D-glycero-beta-D-manno-heptose 7-phosphate. The protein operates within carbohydrate biosynthesis; D-glycero-D-manno-heptose 7-phosphate biosynthesis; D-glycero-alpha-D-manno-heptose 7-phosphate and D-glycero-beta-D-manno-heptose 7-phosphate from sedoheptulose 7-phosphate: step 1/1. Its function is as follows. Catalyzes the isomerization of sedoheptulose 7-phosphate in D-glycero-D-manno-heptose 7-phosphate. In Salmonella dublin (strain CT_02021853), this protein is Phosphoheptose isomerase.